The chain runs to 169 residues: Endoribonuclease YbeY (169 aa).

Positions 72 to 95 are disordered; sequence GPVAAPRQEPDSPPACRKDSSHAE. The Zn(2+) site is built by His131, His135, and His141.

It belongs to the endoribonuclease YbeY family. Zn(2+) serves as cofactor.

The protein localises to the cytoplasm. Its function is as follows. Single strand-specific metallo-endoribonuclease involved in late-stage 70S ribosome quality control and in maturation of the 3' terminus of the 16S rRNA. The polypeptide is Endoribonuclease YbeY (Oleidesulfovibrio alaskensis (strain ATCC BAA-1058 / DSM 17464 / G20) (Desulfovibrio alaskensis)).